A 95-amino-acid chain; its full sequence is Large ribosomal subunit protein uL23 (95 aa).

It belongs to the universal ribosomal protein uL23 family. As to quaternary structure, part of the 50S ribosomal subunit. Contacts protein L29, and trigger factor when it is bound to the ribosome.

In terms of biological role, one of the early assembly proteins it binds 23S rRNA. One of the proteins that surrounds the polypeptide exit tunnel on the outside of the ribosome. Forms the main docking site for trigger factor binding to the ribosome. The sequence is that of Large ribosomal subunit protein uL23 from Desulfotalea psychrophila (strain LSv54 / DSM 12343).